We begin with the raw amino-acid sequence, 1046 residues long: Hemoglobin-haptoglobin-binding protein A (1046 aa).

Residues 1 to 24 form the signal peptide; sequence MTNFRLNLLAYSVMLGLTAGVAYA. Repeat copies occupy residues 26–29, 30–33, 34–37, and 38–41. A 4 X 4 AA tandem repeats of Q-P-T-N region spans residues 26–41; that stretch reads QPTNQPTNQPTNQPTN. Positions 51–58 match the TonB box motif; the sequence is EQINVLGS. In terms of domain architecture, TBDR plug spans 61–188; the sequence is HNDNTPPKIA…LGGSVSFDTK (128 aa). One can recognise a TBDR beta-barrel domain in the interval 196–1046; the sequence is NKNYYASYKR…NYRMSVQFEF (851 aa). Residues 1029 to 1046 carry the TonB C-terminal box motif; sequence NRFYAPGRNYRMSVQFEF.

Belongs to the TonB-dependent receptor family. Hemoglobin/haptoglobin binding protein subfamily.

The protein resides in the cell outer membrane. Its function is as follows. Acts as a receptor for the hemoglobin/haptoglobin complex of the human host and is required for heme uptake. Does not bind hemoglobin alone. This Haemophilus influenzae protein is Hemoglobin-haptoglobin-binding protein A (hhuA).